The following is a 638-amino-acid chain: 1-deoxy-D-xylulose-5-phosphate synthase (638 aa).

Thiamine diphosphate is bound by residues H79 and 120 to 122; that span reads AHS. Position 151 (D151) interacts with Mg(2+). Residues 152–153, N180, Y289, and E371 contribute to the thiamine diphosphate site; that span reads GA. N180 is a Mg(2+) binding site.

Belongs to the transketolase family. DXPS subfamily. Homodimer. The cofactor is Mg(2+). Requires thiamine diphosphate as cofactor.

The enzyme catalyses D-glyceraldehyde 3-phosphate + pyruvate + H(+) = 1-deoxy-D-xylulose 5-phosphate + CO2. It functions in the pathway metabolic intermediate biosynthesis; 1-deoxy-D-xylulose 5-phosphate biosynthesis; 1-deoxy-D-xylulose 5-phosphate from D-glyceraldehyde 3-phosphate and pyruvate: step 1/1. Its function is as follows. Catalyzes the acyloin condensation reaction between C atoms 2 and 3 of pyruvate and glyceraldehyde 3-phosphate to yield 1-deoxy-D-xylulose-5-phosphate (DXP). The chain is 1-deoxy-D-xylulose-5-phosphate synthase from Rhizobium johnstonii (strain DSM 114642 / LMG 32736 / 3841) (Rhizobium leguminosarum bv. viciae).